A 377-amino-acid polypeptide reads, in one-letter code: MLEDPVNEVKRREHALRIIGEKMKKHGRDGIYDLTGLSGGFPLEEEDLDLIETYVGPAIFEEKLQEAGREHMGGEMIAAFNRTSSAILAAVLALTEPGSTVFHYLPELPSHPSVPGSTELASAGYQETEDFTEKPPADTSLVVVTGSTMDHRVVGESDLVRVIEIAHDAGIPVLVDDASGARLRTVLYGQRRACDLGADLAVTSTDKLMHGPRGGLMAGRAELIERVKSKAYQFGLEAQPPLVAAMVRALEEFEPSEIRDAIKRKEEFLRDFRGPEVEETPTGFIIKSSSLEDLQGSGYDGDEISTALSMILLSEHGIVTIPAVGMPGASKTLRFDLAARDAGRIEISFLREAIYDAIKLVSGFINDDEKMRRLILG.

Lys207 carries the N6-(pyridoxal phosphate)lysine modification.

This sequence belongs to the UPF0425 family. Pyridoxal 5'-phosphate serves as cofactor.

This Methanothermobacter thermautotrophicus (strain ATCC 29096 / DSM 1053 / JCM 10044 / NBRC 100330 / Delta H) (Methanobacterium thermoautotrophicum) protein is UPF0425 pyridoxal phosphate-dependent protein MTH_1914.